A 401-amino-acid polypeptide reads, in one-letter code: E3 ubiquitin-protein ligase NHLRC1 (401 aa).

The RING-type zinc-finger motif lies at 28-74 (CKVCFERFGHWQQRRPRNLPCGHVVCLACVAALAHPRTLGLECPFCR). 6 NHL repeats span residues 115-159 (TLTC…FDSG), 163-206 (AHQF…FDFF), 207-247 (GQIK…LEAD), 250-303 (EGVL…FNST), 304-352 (MQLI…LGKP), and 353-396 (EEFP…FKVM).

In terms of assembly, interacts with AGL. Interacts (via the NHL repeats) with EPM2A/laforin. Forms a complex with EPM2A/laforin and HSP70. Interacts with PRDM8.

It localises to the endoplasmic reticulum. The protein localises to the nucleus. The enzyme catalyses S-ubiquitinyl-[E2 ubiquitin-conjugating enzyme]-L-cysteine + [acceptor protein]-L-lysine = [E2 ubiquitin-conjugating enzyme]-L-cysteine + N(6)-ubiquitinyl-[acceptor protein]-L-lysine.. The protein operates within protein modification; protein ubiquitination. E3 ubiquitin-protein ligase. Together with the phosphatase EPM2A/laforin, appears to be involved in the clearance of toxic polyglucosan and protein aggregates via multiple pathways. In complex with EPM2A/laforin and HSP70, suppresses the cellular toxicity of misfolded proteins by promoting their degradation through the ubiquitin-proteasome system (UPS). Ubiquitinates the glycogen-targeting protein phosphatase subunits PPP1R3C/PTG and PPP1R3D in a laforin-dependent manner and targets them for proteasome-dependent degradation, thus decreasing glycogen accumulation. Polyubiquitinates EPM2A/laforin and ubiquitinates AGL and targets them for proteasome-dependent degradation. Also promotes proteasome-independent protein degradation through the macroautophagy pathway. The sequence is that of E3 ubiquitin-protein ligase NHLRC1 (Nhlrc1) from Mus musculus (Mouse).